The chain runs to 575 residues: SH2B adapter protein 3 (575 aa).

Disordered stretches follow at residues 1–23 (MNGP…AAAP), 83–136 (RAPG…CSFQ), and 150–176 (SAGE…PARP). S13 is modified (phosphoserine). Positions 83-93 (RAPGRDYRDTG) are enriched in basic and acidic residues. A compositionally biased stretch (low complexity) spans 95-104 (GPPAKAEASP). Phosphoserine occurs at positions 103, 120, and 150. Over residues 152-174 (GELPAAHTAAAPGTPGEAAETPA) the composition is skewed to low complexity. The 114-residue stretch at 194–307 (EALKEAVLRY…WMAELSECTG (114 aa)) folds into the PH domain. Positions 322-346 (ALEPSTSSSPRGSTDSLNQGASPGG) are disordered. Over residues 325 to 337 (PSTSSSPRGSTDS) the composition is skewed to low complexity. Position 330 is a phosphoserine (S330). Residues 364 to 462 (WFHGPISRVK…ACDVRLSSYV (99 aa)) form the SH2 domain. 2 disordered regions span residues 503-525 (SSGC…PEQI) and 546-575 (PVNR…YTPL).

It belongs to the SH2B adapter family. Binds to the tyrosine-phosphorylated TCR zeta chain via its SH2 domain. In terms of processing, tyrosine phosphorylated by LCK. Preferentially expressed by lymphoid cell lines.

Functionally, links T-cell receptor activation signal to phospholipase C-gamma-1, GRB2 and phosphatidylinositol 3-kinase. This Homo sapiens (Human) protein is SH2B adapter protein 3 (SH2B3).